Reading from the N-terminus, the 220-residue chain is Protein myomaker (220 aa).

A topological domain (extracellular) is located at residue Met1. The chain crosses the membrane as a helical span at residues 2–22 (GAFIAKMLLPTISSLVFVPAA). Residues 23 to 37 (SVAAKRGFHMEAMVY) lie on the Cytoplasmic side of the membrane. Residues 38–58 (FFTMFFTAIYHACDGPGLSIL) form a helical membrane-spanning segment. Residues 59–64 (CFMKYD) are Extracellular-facing. The helical transmembrane segment at 65 to 85 (ILEYFSVYGTAISMWVTLLAL) threads the bilayer. Residues 86 to 93 (GDFDEPKR) are Cytoplasmic-facing. The helical transmembrane segment at 94–110 (SSLTMFGVLTAAVRIYQ) threads the bilayer. Topologically, residues 111–112 (DR) are extracellular. A helical membrane pass occupies residues 113–133 (LGYGIYSGPIGTAVFMITVKW). The Cytoplasmic portion of the chain corresponds to 134–153 (LQKMKEKKGLYPDKSVYTQQ). Residues 154-174 (VGPGCCFGALALMLRFYFEEW) traverse the membrane as a helical segment. Asp175 is a topological domain (extracellular). Residues 176–196 (YAYVHSFYHVSLAMSFILLLP) form a helical membrane-spanning segment. Over 197-220 (KKNRYAGTGRNAAKLNCYTLCCCV) the chain is Cytoplasmic.

This sequence belongs to the TMEM8 family.

The protein localises to the cell membrane. Functionally, myoblast-specific protein that mediates myoblast fusion, an essential step for the formation of multi-nucleated muscle fibers. Actively participates in the membrane fusion reaction by mediating the mixing of cell membrane lipids (hemifusion) upstream of mymx. The sequence is that of Protein myomaker from Danio rerio (Zebrafish).